A 391-amino-acid polypeptide reads, in one-letter code: Formate-dependent phosphoribosylglycinamide formyltransferase (391 aa).

N(1)-(5-phospho-beta-D-ribosyl)glycinamide-binding positions include 18–19 (EL) and E78. ATP is bound by residues R110, K151, 156–161 (SSGKGQ), 191–194 (EEFI), and E199. The region spanning 115 to 305 (ELAHEELGIR…EFELHLRAIL (191 aa)) is the ATP-grasp domain. Residues E264 and E276 each contribute to the Mg(2+) site. Residues D283, K353, and 360–361 (RR) each bind N(1)-(5-phospho-beta-D-ribosyl)glycinamide.

Belongs to the PurK/PurT family. Homodimer.

The catalysed reaction is N(1)-(5-phospho-beta-D-ribosyl)glycinamide + formate + ATP = N(2)-formyl-N(1)-(5-phospho-beta-D-ribosyl)glycinamide + ADP + phosphate + H(+). Its pathway is purine metabolism; IMP biosynthesis via de novo pathway; N(2)-formyl-N(1)-(5-phospho-D-ribosyl)glycinamide from N(1)-(5-phospho-D-ribosyl)glycinamide (formate route): step 1/1. Functionally, involved in the de novo purine biosynthesis. Catalyzes the transfer of formate to 5-phospho-ribosyl-glycinamide (GAR), producing 5-phospho-ribosyl-N-formylglycinamide (FGAR). Formate is provided by PurU via hydrolysis of 10-formyl-tetrahydrofolate. This is Formate-dependent phosphoribosylglycinamide formyltransferase from Nostoc sp. (strain PCC 7120 / SAG 25.82 / UTEX 2576).